The following is a 180-amino-acid chain: Small ribosomal subunit protein bS16 (180 aa).

This sequence belongs to the bacterial ribosomal protein bS16 family.

The polypeptide is Small ribosomal subunit protein bS16 (Flavobacterium psychrophilum (strain ATCC 49511 / DSM 21280 / CIP 103535 / JIP02/86)).